Here is a 443-residue protein sequence, read N- to C-terminus: Probable glycine dehydrogenase (decarboxylating) subunit 1 (443 aa).

This sequence belongs to the GcvP family. N-terminal subunit subfamily. In terms of assembly, the glycine cleavage system is composed of four proteins: P, T, L and H. In this organism, the P 'protein' is a heterodimer of two subunits.

It catalyses the reaction N(6)-[(R)-lipoyl]-L-lysyl-[glycine-cleavage complex H protein] + glycine + H(+) = N(6)-[(R)-S(8)-aminomethyldihydrolipoyl]-L-lysyl-[glycine-cleavage complex H protein] + CO2. In terms of biological role, the glycine cleavage system catalyzes the degradation of glycine. The P protein binds the alpha-amino group of glycine through its pyridoxal phosphate cofactor; CO(2) is released and the remaining methylamine moiety is then transferred to the lipoamide cofactor of the H protein. The polypeptide is Probable glycine dehydrogenase (decarboxylating) subunit 1 (Solidesulfovibrio magneticus (strain ATCC 700980 / DSM 13731 / RS-1) (Desulfovibrio magneticus)).